The sequence spans 499 residues: Aspartyl/glutamyl-tRNA(Asn/Gln) amidotransferase subunit B (499 aa).

The protein belongs to the GatB/GatE family. GatB subfamily. In terms of assembly, heterotrimer of A, B and C subunits.

It carries out the reaction L-glutamyl-tRNA(Gln) + L-glutamine + ATP + H2O = L-glutaminyl-tRNA(Gln) + L-glutamate + ADP + phosphate + H(+). The catalysed reaction is L-aspartyl-tRNA(Asn) + L-glutamine + ATP + H2O = L-asparaginyl-tRNA(Asn) + L-glutamate + ADP + phosphate + 2 H(+). In terms of biological role, allows the formation of correctly charged Asn-tRNA(Asn) or Gln-tRNA(Gln) through the transamidation of misacylated Asp-tRNA(Asn) or Glu-tRNA(Gln) in organisms which lack either or both of asparaginyl-tRNA or glutaminyl-tRNA synthetases. The reaction takes place in the presence of glutamine and ATP through an activated phospho-Asp-tRNA(Asn) or phospho-Glu-tRNA(Gln). This Bifidobacterium animalis subsp. lactis (strain AD011) protein is Aspartyl/glutamyl-tRNA(Asn/Gln) amidotransferase subunit B.